We begin with the raw amino-acid sequence, 345 residues long: Eukaryotic translation initiation factor 3 subunit F (345 aa).

The region spanning 30–166 (VVIQPQAIFS…TRAYISAPVG (137 aa)) is the MPN domain. The disordered stretch occupies residues 310-345 (EGASAEAGAQRGQRGGRGGRGGQQRTQERASEEVRA). Positions 312-321 (ASAEAGAQRG) are enriched in low complexity. Over residues 322–331 (QRGGRGGRGG) the composition is skewed to gly residues. A compositionally biased stretch (basic and acidic residues) spans 335-345 (TQERASEEVRA).

Belongs to the eIF-3 subunit F family. In terms of assembly, component of the eukaryotic translation initiation factor 3 (eIF-3) complex.

It is found in the cytoplasm. In terms of biological role, component of the eukaryotic translation initiation factor 3 (eIF-3) complex, which is involved in protein synthesis of a specialized repertoire of mRNAs and, together with other initiation factors, stimulates binding of mRNA and methionyl-tRNAi to the 40S ribosome. The eIF-3 complex specifically targets and initiates translation of a subset of mRNAs involved in cell proliferation. In Neosartorya fischeri (strain ATCC 1020 / DSM 3700 / CBS 544.65 / FGSC A1164 / JCM 1740 / NRRL 181 / WB 181) (Aspergillus fischerianus), this protein is Eukaryotic translation initiation factor 3 subunit F.